Reading from the N-terminus, the 324-residue chain is tRNA dimethylallyltransferase (324 aa).

Gly-17–Thr-24 contributes to the ATP binding site. Thr-19–Thr-24 is a binding site for substrate. Interaction with substrate tRNA regions lie at residues Asp-42–Leu-45, Gln-166–Arg-170, Arg-251–Arg-256, and Lys-284–Arg-291.

This sequence belongs to the IPP transferase family. As to quaternary structure, monomer. The cofactor is Mg(2+).

It catalyses the reaction adenosine(37) in tRNA + dimethylallyl diphosphate = N(6)-dimethylallyladenosine(37) in tRNA + diphosphate. Its function is as follows. Catalyzes the transfer of a dimethylallyl group onto the adenine at position 37 in tRNAs that read codons beginning with uridine, leading to the formation of N6-(dimethylallyl)adenosine (i(6)A). This is tRNA dimethylallyltransferase from Burkholderia orbicola (strain MC0-3).